A 242-amino-acid polypeptide reads, in one-letter code: Probable transcriptional regulatory protein STH1004 (242 aa).

It belongs to the TACO1 family.

Its subcellular location is the cytoplasm. The chain is Probable transcriptional regulatory protein STH1004 from Symbiobacterium thermophilum (strain DSM 24528 / JCM 14929 / IAM 14863 / T).